The following is a 305-amino-acid chain: Glycine betaine-binding protein YehZ (305 aa).

A signal peptide spans 1–23 (MPLLKLWAGSLVMLAAVSLPLQA).

The protein belongs to the OsmX family. As to quaternary structure, the complex is composed of two ATP-binding proteins (YehX), two transmembrane proteins (YehW and YehY) and a solute-binding protein (YehZ).

It localises to the periplasm. Its function is as follows. Part of an ABC transporter complex involved in low-affinity glycine betaine uptake. Binds glycine betaine with low affinity. This is Glycine betaine-binding protein YehZ (yehZ) from Escherichia coli (strain K12).